A 260-amino-acid chain; its full sequence is tRNA pseudouridine synthase A (260 aa).

The Nucleophile role is filled by D52. Residue Y111 participates in substrate binding.

The protein belongs to the tRNA pseudouridine synthase TruA family. Homodimer.

The catalysed reaction is uridine(38/39/40) in tRNA = pseudouridine(38/39/40) in tRNA. Its function is as follows. Formation of pseudouridine at positions 38, 39 and 40 in the anticodon stem and loop of transfer RNAs. This Roseobacter denitrificans (strain ATCC 33942 / OCh 114) (Erythrobacter sp. (strain OCh 114)) protein is tRNA pseudouridine synthase A.